Reading from the N-terminus, the 254-residue chain is Acetylglutamate kinase (254 aa).

Residues 40–41, R62, and N158 contribute to the substrate site; that span reads GG.

This sequence belongs to the acetylglutamate kinase family. ArgB subfamily.

Its subcellular location is the cytoplasm. It carries out the reaction N-acetyl-L-glutamate + ATP = N-acetyl-L-glutamyl 5-phosphate + ADP. It functions in the pathway amino-acid biosynthesis; L-arginine biosynthesis; N(2)-acetyl-L-ornithine from L-glutamate: step 2/4. In terms of biological role, catalyzes the ATP-dependent phosphorylation of N-acetyl-L-glutamate. The chain is Acetylglutamate kinase from Chloroflexus aurantiacus (strain ATCC 29366 / DSM 635 / J-10-fl).